The chain runs to 322 residues: Probable L-asparaginase (322 aa).

An Asparaginase/glutaminase domain is found at 6 to 320; the sequence is PRLALIHTGG…EDIRRVFTQG (315 aa). The tract at residues 13–37 is disordered; that stretch reads TGGTIASRPSPDGRGLTPQTPPALP. The active-site O-isoaspartyl threonine intermediate is the Thr16. Substrate contacts are provided by residues Ser54 and 85–86; that span reads TD.

It belongs to the asparaginase 1 family.

It is found in the cytoplasm. It catalyses the reaction L-asparagine + H2O = L-aspartate + NH4(+). This is Probable L-asparaginase (ansA) from Deinococcus radiodurans (strain ATCC 13939 / DSM 20539 / JCM 16871 / CCUG 27074 / LMG 4051 / NBRC 15346 / NCIMB 9279 / VKM B-1422 / R1).